Reading from the N-terminus, the 366-residue chain is GTPase Obg (366 aa).

Residues 1-162 (MRFVDEAVIK…KSLRLELKIL (162 aa)) enclose the Obg domain. The segment at 125-150 (RGGKGNEHFKSSTMQAPRFSQPGEPG) is disordered. The 173-residue stretch at 163 to 335 (ADAGLLGLPN…VVSEMWRMLA (173 aa)) folds into the OBG-type G domain. GTP is bound by residues 169-176 (GLPNAGKS), 194-198 (FTTLV), 218-221 (DIPG), 288-291 (NKID), and 316-318 (SAL). Mg(2+) is bound by residues serine 176 and threonine 196.

Belongs to the TRAFAC class OBG-HflX-like GTPase superfamily. OBG GTPase family. As to quaternary structure, monomer. The cofactor is Mg(2+).

The protein localises to the cytoplasm. Its function is as follows. An essential GTPase which binds GTP, GDP and possibly (p)ppGpp with moderate affinity, with high nucleotide exchange rates and a fairly low GTP hydrolysis rate. Plays a role in control of the cell cycle, stress response, ribosome biogenesis and in those bacteria that undergo differentiation, in morphogenesis control. The polypeptide is GTPase Obg (Oleidesulfovibrio alaskensis (strain ATCC BAA-1058 / DSM 17464 / G20) (Desulfovibrio alaskensis)).